The chain runs to 501 residues: Putative zinc metalloprotease TM_0890 (501 aa).

His17 contacts Zn(2+). The active site involves Glu18. His21 contacts Zn(2+). 4 helical membrane passes run 93-115 (FLIT…LPIT), 401-420 (VQTG…SAAS), 427-449 (VLTV…LPAL), and 474-496 (IIHF…LDIG). In terms of domain architecture, PDZ spans 96–180 (TLAGPLFSIL…LVIIRNGEKK (85 aa)).

The protein belongs to the peptidase M50B family. Zn(2+) serves as cofactor.

The protein localises to the cell inner membrane. The polypeptide is Putative zinc metalloprotease TM_0890 (Thermotoga maritima (strain ATCC 43589 / DSM 3109 / JCM 10099 / NBRC 100826 / MSB8)).